The sequence spans 330 residues: Diacylglycerol O-acyltransferase 2 (330 aa).

Transmembrane regions (helical) follow at residues 15–35 (LETM…IMAF) and 37–57 (LIVI…MFYF).

The protein belongs to the diacylglycerol acyltransferase family.

It is found in the endoplasmic reticulum membrane. The enzyme catalyses an acyl-CoA + a 1,2-diacyl-sn-glycerol = a triacyl-sn-glycerol + CoA. It carries out the reaction all-trans-retinol + an acyl-CoA = an all-trans-retinyl ester + CoA. The catalysed reaction is 2-(9Z-octadecenoyl)-glycerol + (9Z)-octadecenoyl-CoA = 1,2-di-(9Z-octadecenoyl)-sn-glycerol + CoA. It catalyses the reaction 1,2-di-(9Z-octadecenoyl)-sn-glycerol + (9Z)-octadecenoyl-CoA = 1,2,3-tri-(9Z-octadecenoyl)-glycerol + CoA. The enzyme catalyses all-trans-retinol + hexadecanoyl-CoA = all-trans-retinyl hexadecanoate + CoA. It carries out the reaction 1-O-(9Z-octadecenyl)-glycerol + (9Z)-octadecenoyl-CoA = 1-O-(9Z-octadecyl)-3-(9Z-octadecenoyl)-glycerol + CoA. The catalysed reaction is 1-(9Z-octadecenoyl)-glycerol + (9Z)-octadecenoyl-CoA = 1,2-di-(9Z-octadecenoyl)-glycerol + CoA. It catalyses the reaction 1,2-di-(9Z-octadecenoyl)-sn-glycerol + hexadecanoyl-CoA = 1,2-di-(9Z)-octadecenoyl-3-hexadecanoyl-sn-glycerol + CoA. The enzyme catalyses 1,3-di-(9Z-octadecenoyl)-glycerol + (9Z)-octadecenoyl-CoA = 1,2,3-tri-(9Z-octadecenoyl)-glycerol + CoA. It carries out the reaction 2,3-di-(9Z)-octadecenoyl-sn-glycerol + (9Z)-octadecenoyl-CoA = 1,2,3-tri-(9Z-octadecenoyl)-glycerol + CoA. The catalysed reaction is 2-(9Z-octadecenoyl)-glycerol + hexadecanoyl-CoA = 1-hexadecanoyl-2-(9Z-octadecenoyl)-sn-glycerol + CoA. It functions in the pathway glycerolipid metabolism; triacylglycerol biosynthesis. In terms of biological role, catalyzes the terminal and only committed step in triacylglycerol synthesis by using diacylglycerol and fatty acyl CoA as substrates. Required for storage lipid synthesis. This chain is Diacylglycerol O-acyltransferase 2 (dgat2), found in Dictyostelium discoideum (Social amoeba).